Consider the following 222-residue polypeptide: Cyclin-dependent kinase inhibitor 3 (222 aa).

A disordered region spans residues 68-101; sequence KPSSLIEPKQPPRVHRSGIKESGSRSRVDSVNSV. Residues 85 to 95 are compositionally biased toward basic and acidic residues; the sequence is GIKESGSRSRV.

This sequence belongs to the CDI family. ICK/KRP subfamily. In terms of assembly, specifically interacts with CDKA-1, but not with CDKB1-1.

It is found in the nucleus. The protein localises to the nucleoplasm. Its function is as follows. Binds and inhibits CYCD2-1/CDKA-1 complex kinase activity. May target specifically CDKA-1. This Arabidopsis thaliana (Mouse-ear cress) protein is Cyclin-dependent kinase inhibitor 3 (KRP3).